Here is a 300-residue protein sequence, read N- to C-terminus: Small ribosomal subunit protein uS2 (300 aa).

The disordered stretch occupies residues 228 to 300 (RAGLSADKDA…PAAEAPSTEA (73 aa)). Residues 258–300 (AAPAAEAAPAAEAAPAAEAAPAAEAQAAPAAEAPAAEAPSTEA) show a composition bias toward low complexity.

This sequence belongs to the universal ribosomal protein uS2 family.

The sequence is that of Small ribosomal subunit protein uS2 from Rhodococcus jostii (strain RHA1).